Here is a 401-residue protein sequence, read N- to C-terminus: ATP phosphoribosyltransferase regulatory subunit (401 aa).

Belongs to the class-II aminoacyl-tRNA synthetase family. HisZ subfamily. As to quaternary structure, heteromultimer composed of HisG and HisZ subunits.

It localises to the cytoplasm. It functions in the pathway amino-acid biosynthesis; L-histidine biosynthesis; L-histidine from 5-phospho-alpha-D-ribose 1-diphosphate: step 1/9. Functionally, required for the first step of histidine biosynthesis. May allow the feedback regulation of ATP phosphoribosyltransferase activity by histidine. The protein is ATP phosphoribosyltransferase regulatory subunit of Desulforamulus reducens (strain ATCC BAA-1160 / DSM 100696 / MI-1) (Desulfotomaculum reducens).